A 320-amino-acid polypeptide reads, in one-letter code: Cytochrome f (320 aa).

The N-terminal stretch at 1-35 is a signal peptide; it reads MQTRNTFFWIKEQMTRSISVSIIVYVITQTSISNA. Heme contacts are provided by Tyr-36, Cys-56, Cys-59, and His-60. The helical transmembrane segment at 286-306 threads the bilayer; it reads VQGLLFFFASVILAQIFLVLK.

The protein belongs to the cytochrome f family. As to quaternary structure, the 4 large subunits of the cytochrome b6-f complex are cytochrome b6, subunit IV (17 kDa polypeptide, petD), cytochrome f and the Rieske protein, while the 4 small subunits are PetG, PetL, PetM and PetN. The complex functions as a dimer. Requires heme as cofactor.

It is found in the plastid. The protein resides in the chloroplast thylakoid membrane. Its function is as follows. Component of the cytochrome b6-f complex, which mediates electron transfer between photosystem II (PSII) and photosystem I (PSI), cyclic electron flow around PSI, and state transitions. The sequence is that of Cytochrome f from Buxus microphylla (Littleleaf boxwood).